Consider the following 253-residue polypeptide: Probable transcriptional regulatory protein A1G_04400 (253 aa).

Residues 1 to 21 are disordered; it reads MAGHSKFKNIQHRKGAQDKKR.

Belongs to the TACO1 family.

It localises to the cytoplasm. In Rickettsia rickettsii (strain Sheila Smith), this protein is Probable transcriptional regulatory protein A1G_04400.